Reading from the N-terminus, the 524-residue chain is Probable aminopeptidase NPEPL1 (524 aa).

2 residues coordinate Zn(2+): K260 and D265. The active site involves K272. D283, D342, and E344 together coordinate Zn(2+). R346 is an active-site residue.

This sequence belongs to the peptidase M17 family. Requires Zn(2+) as cofactor. Mn(2+) serves as cofactor.

Probably catalyzes the removal of unsubstituted N-terminal amino acids from various peptides. The chain is Probable aminopeptidase NPEPL1 (Npepl1) from Mus musculus (Mouse).